A 143-amino-acid chain; its full sequence is MRGPELRLVLLALVLCQAPLGPAAPVSVGGGTVLAKMYPRGNHWAVGHLMGKKSTGESRHVLEGDGLKELLRDDIQWEEATRNLLGLIEAKGNSSHRSPQLKPLSTHQPTLDTEDSSNLKDVQLAKLVDYLLQGLKAKEGALS.

The signal sequence occupies residues 1-23; sequence MRGPELRLVLLALVLCQAPLGPA. The residue at position 50 (M50) is a Methionine amide. The propeptide occupies 54-143; the sequence is STGESRHVLE…GLKAKEGALS (90 aa). The interval 91-115 is disordered; sequence KGNSSHRSPQLKPLSTHQPTLDTED. The segment covering 92–111 has biased composition (polar residues); sequence GNSSHRSPQLKPLSTHQPTL.

Belongs to the bombesin/neuromedin-B/ranatensin family.

The protein localises to the secreted. It is found in the cytoplasmic vesicle. Its subcellular location is the secretory vesicle lumen. It localises to the cell projection. The protein resides in the neuron projection. Stimulates the release of gastrin and other gastrointestinal hormones. Contributes to the perception of prurient stimuli and to the transmission of itch signals in the spinal cord that promote scratching behavior. Contributes primarily to nonhistaminergic itch sensation. In one study, shown to act in the amygdala as part of an inhibitory network which inhibits memory specifically related to learned fear. In another study, shown to act on vasoactive intestinal peptide (VIP)-expressing cells in the auditory cortex, most likely via extrasynaptic diffusion from local and long-range sources, to mediate disinhibition of glutamatergic cells via VIP cell-specific GRPR signaling which leads to enhanced auditory fear memories. Contributes to the regulation of food intake. Inhibits voltage-gated sodium channels but enhances voltage-gated potassium channels in hippocampal neurons. Induces sighing by acting directly on the pre-Botzinger complex, a cluster of several thousand neurons in the ventrolateral medulla responsible for inspiration during respiratory activity. Its function is as follows. Induces an itch response through activation of receptors present on mast cells, triggering mast cell degranulation. The chain is Gastrin-releasing peptide (GRP) from Cavia porcellus (Guinea pig).